We begin with the raw amino-acid sequence, 180 residues long: MPTKALGETLNEYVVVGRKIPTEKEPVTPIWKMQIFATNHVIAKSRFWYFVSMLRRVKKANGEILSIKQVFEKNPGTVKNYGVWLKYDSRTGHHNMYREYRDTTVAGAVTQCYRDMGARHRAQADRIHILKVQTVKAEDTKRAGIKMFHDAKIRFPLPHRVTKRKNLSVFTTARQNTHFA.

It belongs to the eukaryotic ribosomal protein eL20 family.

This chain is Large ribosomal subunit protein eL20, found in Caenorhabditis elegans.